The primary structure comprises 280 residues: Fe-S cluster assembly protein DRE2 (280 aa).

An N-terminal SAM-like domain region spans residues 1-121 (MSNLLVFDNS…TTLLKKSGGG (121 aa)). The segment at 122–176 (PKKFAFKRASPATAAPSTNGTNPAATVNLNSVVTLSMDDDDLMDEDDLMEDDTNL) is linker. Residues Cys186, Cys198, Cys201, and Cys203 each contribute to the [2Fe-2S] cluster site. Residues 186–203 (CDPGPGKKRRKACKDCTC) form a fe-S binding site A region. Positions 244, 247, 255, and 258 each coordinate [4Fe-4S] cluster. Short sequence motifs (cx2C motif) lie at residues 244-247 (CGSC) and 255-258 (CDGC). Residues 244–258 (CGSCALGDAFRCDGC) are fe-S binding site B.

Belongs to the anamorsin family. Monomer. Interacts with TAH18. Interacts with MIA40. It depends on [2Fe-2S] cluster as a cofactor. [4Fe-4S] cluster serves as cofactor.

It is found in the cytoplasm. The protein resides in the mitochondrion intermembrane space. In terms of biological role, component of the cytosolic iron-sulfur (Fe-S) protein assembly (CIA) machinery required for the maturation of extramitochondrial Fe-S proteins. Part of an electron transfer chain functioning in an early step of cytosolic Fe-S biogenesis, facilitating the de novo assembly of a [4Fe-4S] cluster on the scaffold complex CFD1-NBP35. Electrons are transferred to DRE2 from NADPH via the FAD- and FMN-containing protein TAH18. TAH18-DRE2 are also required for the assembly of the diferric tyrosyl radical cofactor of ribonucleotide reductase (RNR), probably by providing electrons for reduction during radical cofactor maturation in the catalytic small subunit RNR2. In Yarrowia lipolytica (strain CLIB 122 / E 150) (Yeast), this protein is Fe-S cluster assembly protein DRE2.